Reading from the N-terminus, the 284-residue chain is Nucleotide-binding protein PputGB1_0956 (284 aa).

8-15 (GRSGSGKS) provides a ligand contact to ATP. 60–63 (DARN) provides a ligand contact to GTP.

The protein belongs to the RapZ-like family.

In terms of biological role, displays ATPase and GTPase activities. This chain is Nucleotide-binding protein PputGB1_0956, found in Pseudomonas putida (strain GB-1).